The sequence spans 61 residues: uncharacterized protein (61 aa).

Transmembrane regions (helical) follow at residues 7–24 (FNVF…YKLF) and 29–48 (VSTT…IVGL).

It is found in the cell membrane. This is an uncharacterized protein from Bacillus subtilis (strain 168).